We begin with the raw amino-acid sequence, 134 residues long: Nif-regulating protein A (134 aa).

A C4-type; atypical zinc finger spans residues 3 to 36 (CLECGLVYIVSGLKVPEKISVRVFVNRIEHPFTH).

As to quaternary structure, interacts with the general archaeal transcription factors TBPs.

Its function is as follows. Involved in nitrogen regulation. Enhances the transcription of the nitrogen fixation (nif) operon under nitrogen-limited conditions. Acts by binding to the nifH promoter region. This is Nif-regulating protein A from Methanosarcina mazei (strain ATCC BAA-159 / DSM 3647 / Goe1 / Go1 / JCM 11833 / OCM 88) (Methanosarcina frisia).